A 240-amino-acid polypeptide reads, in one-letter code: DISARM protein DrmC (240 aa).

Positions 174-201 constitute a PLD phosphodiesterase domain; that stretch reads GYSSLHAKVIMVDEEKAFVSSANLSYNG. Catalysis depends on residues H179, K181, and D186.

The protein belongs to the phospholipase D family.

The protein resides in the cytoplasm. Functionally, component of antiviral defense system DISARM (defense island system associated with restriction-modification), composed of DrmE, DrmA, DrmB, DrmC and DrmMII. DISARM is probably a multi-gene restriction module, this subunit is probably a phospholipase or nuclease. Expression of DISARM in B.subtilis (strain BEST7003) confers resistance to phages Nf, phi29, phi105, phi3T, SPO1, SPR and SPP1. Protection is over 10(7)-fold against phi3T, 10(4)-10(5)-fold against Nf, phi29, phi105 and SPR, 100-fold against SPO1 and 10-fold against SPP1. DISARM does not interfere with phage adsorption, but instead interferes with (phi3T) DNA replication early in its cycle, preventing replication, circularization and lysogeny and probably causes phage DNA degradation (DNA is degraded in SPP1-infected cells). This chain is DISARM protein DrmC, found in Bacillus paralicheniformis (strain ATCC 9945a / NCIMB 11709 / CD-2).